We begin with the raw amino-acid sequence, 553 residues long: Zinc finger CCHC domain-containing protein 8 homolog (553 aa).

The residue at position 59 (Ser59) is a Phosphoserine. Residues 183–200 (SSCFNCGDTEHSLRDCTK) form a CCHC-type zinc finger. Phosphoserine occurs at positions 292 and 347. Tyr356 is modified (phosphotyrosine). The segment at 388–492 (LEEETEDPPL…APSTPFKASY (105 aa)) is disordered. Over residues 395 to 409 (PPLPPSVPPPQPPPP) the composition is skewed to pro residues. A phosphoserine mark is found at Ser421 and Ser423. 2 stretches are compositionally biased toward polar residues: residues 444-456 (ASHN…SKSP) and 473-485 (ESGN…SAPS).

Belongs to the ZCCHC8 family.

It is found in the nucleus. The protein localises to the nucleoplasm. In terms of biological role, scaffolding subunit of the trimeric nuclear exosome targeting (NEXT) complex, a complex that directs a subset of non-coding short-lived RNAs for exosomal degradation. The RNA exosome is fundamental for the degradation of RNA in eukaryotic nuclei. May be involved in pre-mRNA splicing. The protein is Zinc finger CCHC domain-containing protein 8 homolog of Drosophila melanogaster (Fruit fly).